The primary structure comprises 1226 residues: 3-hydroxy-3-methylglutaryl-coenzyme A reductase (1226 aa).

The next 5 membrane-spanning stretches (helical) occupy residues 17–37 (IETI…ILSG), 224–244 (ILVV…LFLA), 252–272 (FWLS…TLPM), 337–357 (VGNM…VGVN), and 373–393 (LLAM…TIMV). Residues 223 to 391 (DILVVLTGYI…FTLYTAVLTI (169 aa)) form the SSD domain. Residues 428–449 (LSRKSSKQSVTEPETTKNLRQR) form a disordered region. Over residues 434–445 (KQSVTEPETTKN) the composition is skewed to polar residues. A helical transmembrane segment spans residues 481–501 (LLLIASFLTLHILNFCTTLTS). Disordered regions lie at residues 683-702 (APAP…PPPL) and 722-742 (LPIR…EVEP). The span at 685–702 (APAPAPEPEPPVNRPPPL) shows a compositional bias: pro residues. E869 acts as the Charge relay system in catalysis. 875–881 (STSRGCK) contacts CoA. Residues 936–938 (SRF) and 963–971 (DAMGMNMIS) contribute to the NADP(+) site. K1001 acts as the Charge relay system in catalysis. 1030 to 1032 (VLK) is a CoA binding site. The active-site Charge relay system is the D1077. The chain crosses the membrane as a helical span at residues 1150–1170 (IIASAVMAGELSLISALAAGH). 1174 to 1175 (AH) contributes to the CoA binding site. Residue H1175 is the Proton donor of the active site. NADP(+) is bound at residue 1179–1180 (NR). Positions 1182–1226 (QLNTPMPSRPHTPGPEDVSHVQQLPTPSASDDKGVTAQGYVVEAK) are disordered. Residues 1201–1210 (HVQQLPTPSA) are compositionally biased toward polar residues.

Belongs to the HMG-CoA reductase family.

It is found in the endoplasmic reticulum membrane. The catalysed reaction is (R)-mevalonate + 2 NADP(+) + CoA = (3S)-3-hydroxy-3-methylglutaryl-CoA + 2 NADPH + 2 H(+). It participates in metabolic intermediate biosynthesis; (R)-mevalonate biosynthesis; (R)-mevalonate from acetyl-CoA: step 3/3. Functionally, HMG-CoA reductase; part of the first module of ergosterol biosynthesis pathway that includes the early steps of the pathway, conserved across all eukaryotes, and which results in the formation of mevalonate from acetyl-coenzyme A (acetyl-CoA). This module also plays a key role in the biosynthesis of triterpenes such as ganoderic acids (GA), a group of highly oxygenated lanostane-type triterpenoids which are well recognized as a main group of unique bioactive compounds in the medicinal mushroom Ganoderma lucidum. In this module, the acetyl-CoA acetyltransferase catalyzes the formation of acetoacetyl-CoA. The hydroxymethylglutaryl-CoA synthase HMGS then condenses acetyl-CoA with acetoacetyl-CoA to form HMG-CoA. The rate-limiting step of the early module is the reduction to mevalonate by the 3-hydroxy-3-methylglutaryl-coenzyme A (HMG-CoA) reductase. The chain is 3-hydroxy-3-methylglutaryl-coenzyme A reductase from Ganoderma lucidum (Ling zhi medicinal fungus).